The chain runs to 1143 residues: FH2 domain-containing protein 1 (1143 aa).

The interval 16 to 89 (GNIATAPGFM…PPTTHMNGYS (74 aa)) is disordered. Pro residues-rich tracts occupy residues 29–46 (TPPP…PSPP) and 56–80 (SSPP…PGLP). In terms of domain architecture, FH2 spans 87 to 482 (GYSHLGKKKR…QLQRLKEQEQ (396 aa)). Ser500 carries the post-translational modification Phosphoserine. Residues 517 to 638 (PFLHPRPISP…NHASAFPRAR (122 aa)) form a disordered region. Over residues 521–534 (PRPISPSSPSYRPP) the composition is skewed to low complexity. Phosphoserine occurs at positions 650, 660, and 664. A disordered region spans residues 706–1143 (LESVGHRGPQ…LGRILNPLRK (438 aa)). Positions 806–818 (GSMSSGVGEMGDS) are enriched in low complexity. The span at 848-861 (LPRDKPTKRKDVVA) shows a compositional bias: basic and acidic residues. Polar residues predominate over residues 925–947 (RGPSQNPPSSTDTVWSRQNSVRR). Residues 958–968 (PRGSSGSSSTR) show a composition bias toward low complexity. The segment at 960-1086 (GSSGSSSTRP…DAAPKDSSTL (127 aa)) is MTBD; microtubule-binding domain. Basic and acidic residues predominate over residues 995-1018 (QKPEENKTCRAHSEGPESPKEEPK). The span at 1036 to 1046 (ARNTVASSSRS) shows a compositional bias: polar residues. Composition is skewed to basic and acidic residues over residues 1071 to 1080 (VKGDPEDAAP) and 1117 to 1130 (GAGE…KDSS).

As to quaternary structure, interacts with CEP170.

It is found in the cell projection. The protein localises to the cilium. The protein resides in the golgi apparatus. Functionally, microtubule-associated formin which regulates both actin and microtubule dynamics. Induces microtubule acetylation and stabilization and actin stress fiber formation. Regulates Golgi ribbon formation. Required for normal cilia assembly. Early in cilia assembly, may assist in the maturation and positioning of the centrosome/basal body, and once cilia assembly has initiated, may also promote cilia elongation by inhibiting disassembly. The sequence is that of FH2 domain-containing protein 1 (FHDC1) from Homo sapiens (Human).